Reading from the N-terminus, the 713-residue chain is Polyphosphate kinase (713 aa).

Residue N63 participates in ATP binding. Residues R394 and R424 each coordinate Mg(2+). Catalysis depends on H454, which acts as the Phosphohistidine intermediate. Y487, R583, and H611 together coordinate ATP.

Belongs to the polyphosphate kinase 1 (PPK1) family. It depends on Mg(2+) as a cofactor. Post-translationally, an intermediate of this reaction is the autophosphorylated ppk in which a phosphate is covalently linked to a histidine residue through a N-P bond.

It carries out the reaction [phosphate](n) + ATP = [phosphate](n+1) + ADP. Functionally, catalyzes the reversible transfer of the terminal phosphate of ATP to form a long-chain polyphosphate (polyP). In Prosthecochloris aestuarii (strain DSM 271 / SK 413), this protein is Polyphosphate kinase.